The chain runs to 405 residues: Argininosuccinate synthase (405 aa).

Residues 13 to 21 and alanine 40 each bind ATP; that span reads AYSGGLDTS. Tyrosine 91 and serine 96 together coordinate L-citrulline. Residue glycine 121 participates in ATP binding. L-aspartate contacts are provided by threonine 123, asparagine 127, and aspartate 128. Asparagine 127 contributes to the L-citrulline binding site. The L-citrulline site is built by arginine 131, serine 182, serine 191, glutamate 267, and tyrosine 279.

This sequence belongs to the argininosuccinate synthase family. Type 1 subfamily. In terms of assembly, homotetramer.

The protein resides in the cytoplasm. The catalysed reaction is L-citrulline + L-aspartate + ATP = 2-(N(omega)-L-arginino)succinate + AMP + diphosphate + H(+). It participates in amino-acid biosynthesis; L-arginine biosynthesis; L-arginine from L-ornithine and carbamoyl phosphate: step 2/3. This chain is Argininosuccinate synthase, found in Rhizobium meliloti (strain 1021) (Ensifer meliloti).